Here is a 304-residue protein sequence, read N- to C-terminus: Homoserine kinase (304 aa).

Residue 92-102 (PLARGLGSSAT) coordinates ATP.

This sequence belongs to the GHMP kinase family. Homoserine kinase subfamily.

It localises to the cytoplasm. The enzyme catalyses L-homoserine + ATP = O-phospho-L-homoserine + ADP + H(+). It participates in amino-acid biosynthesis; L-threonine biosynthesis; L-threonine from L-aspartate: step 4/5. Its function is as follows. Catalyzes the ATP-dependent phosphorylation of L-homoserine to L-homoserine phosphate. The sequence is that of Homoserine kinase from Nostoc punctiforme (strain ATCC 29133 / PCC 73102).